Consider the following 249-residue polypeptide: MADS-box transcription factor 18 (249 aa).

An MADS-box domain is found at 1–61; it reads MGRGPVQLRR…GKLYEFSSHS (61 aa). The K-box domain occupies 88–179; the sequence is QENWGDEYGI…KLMETEKEKN (92 aa). The tract at residues 184 to 249 is disordered; it reads NTNREEQNGA…PPWMLRTSHT (66 aa). Over residues 210–236 the composition is skewed to polar residues; it reads PTTNNSQSQPRGSGESEAQPSPAQAGN.

In terms of tissue distribution, widely expressed. Transcripts accumulate to higher levels in organs that retain meristematic characteristics: in the apical meristem and in the meristematic leaf primordia formed on its flank; in the developing panicle at the early stage of rachis-branch primordia differentiation; in the procambium of the rachis branches and in all floral organ primordia.

It is found in the nucleus. Probable transcription factor. The sequence is that of MADS-box transcription factor 18 (MADS18) from Oryza sativa subsp. indica (Rice).